A 119-amino-acid polypeptide reads, in one-letter code: Large ribosomal subunit protein bL20 (119 aa).

This sequence belongs to the bacterial ribosomal protein bL20 family.

In terms of biological role, binds directly to 23S ribosomal RNA and is necessary for the in vitro assembly process of the 50S ribosomal subunit. It is not involved in the protein synthesizing functions of that subunit. This is Large ribosomal subunit protein bL20 from Alkalilimnicola ehrlichii (strain ATCC BAA-1101 / DSM 17681 / MLHE-1).